The sequence spans 142 residues: Small ribosomal subunit protein uS9 (142 aa).

The protein belongs to the universal ribosomal protein uS9 family.

This Debaryomyces hansenii (strain ATCC 36239 / CBS 767 / BCRC 21394 / JCM 1990 / NBRC 0083 / IGC 2968) (Yeast) protein is Small ribosomal subunit protein uS9 (RPS16).